A 652-amino-acid polypeptide reads, in one-letter code: Acetyl-coenzyme A synthetase (652 aa).

CoA is bound by residues Arg191–Arg194, Thr311, and Asn335. ATP contacts are provided by residues Gly387–Pro389, Asp411–Thr416, Asp500, and Arg515. Residue Ser523 participates in CoA binding. An ATP-binding site is contributed by Arg526. Mg(2+)-binding residues include Val537, His539, and Ile542. Residue Arg584 participates in CoA binding. The residue at position 609 (Lys609) is an N6-acetyllysine.

This sequence belongs to the ATP-dependent AMP-binding enzyme family. It depends on Mg(2+) as a cofactor. Acetylated. Deacetylation by the SIR2-homolog deacetylase activates the enzyme.

The catalysed reaction is acetate + ATP + CoA = acetyl-CoA + AMP + diphosphate. Its function is as follows. Catalyzes the conversion of acetate into acetyl-CoA (AcCoA), an essential intermediate at the junction of anabolic and catabolic pathways. Acs undergoes a two-step reaction. In the first half reaction, Acs combines acetate with ATP to form acetyl-adenylate (AcAMP) intermediate. In the second half reaction, it can then transfer the acetyl group from AcAMP to the sulfhydryl group of CoA, forming the product AcCoA. Enables the cell to use acetate during aerobic growth to generate energy via the TCA cycle, and biosynthetic compounds via the glyoxylate shunt. Acetylates CheY, the response regulator involved in flagellar movement and chemotaxis. This Escherichia coli O157:H7 protein is Acetyl-coenzyme A synthetase.